We begin with the raw amino-acid sequence, 558 residues long: MSFKTDAEIAQSSTMRPIGEIAAKLGLNADNIEPYGHYKAKINPAEAFKLPQKQGRLILVTAINPTPAGEGKTTVTIGLADALRHIGKDAVIALREPSLGPVFGVKGGAAGGGYAQVLPMEDINLHFTGDFHAIGAANNLLAAMLDNHIYQGNELNIDPKRVLWRRVVDMNDRQLRNIIDGMGKPVDGVMRPDGFDITVASEVMAVFCLAKDISDLKERLGNILVAYAKDGSPVYAKDLKANGAMAALLKDAIKPNLVQTIEGTPAFVHGGPFANIAHGCNSVTATRLAKHLADYAVTEAGFGADLGAEKFCDIKCRLAGLKPDAAVVVATVRALKYNGGVERANLGEENLDALEKGLPNLLKHISNLKNVFGLPVVVALNRFVSDADAELAMIEKACAEHGVEVSLTEVWGKGGAGGADLARKVVNAIESQTNNFGFAYDVELGIKDKIRAIAQKVYGAEDVDFSAEASAEIASLEKLGLDKMPICMAKTQYSLSDNAKLLGCPEDFRIAVRGITVSAGAGFIVALCGNMMKMPGLPKVPAAEKIDVDAEGVIHGLF.

66 to 73 (TPAGEGKT) provides a ligand contact to ATP.

This sequence belongs to the formate--tetrahydrofolate ligase family.

The catalysed reaction is (6S)-5,6,7,8-tetrahydrofolate + formate + ATP = (6R)-10-formyltetrahydrofolate + ADP + phosphate. It participates in one-carbon metabolism; tetrahydrofolate interconversion. The chain is Formate--tetrahydrofolate ligase from Neisseria meningitidis serogroup B (strain ATCC BAA-335 / MC58).